Consider the following 106-residue polypeptide: Small ribosomal subunit protein uS10 (106 aa).

The protein belongs to the universal ribosomal protein uS10 family. In terms of assembly, part of the 30S ribosomal subunit.

Involved in the binding of tRNA to the ribosomes. The sequence is that of Small ribosomal subunit protein uS10 from Synechococcus sp. (strain CC9902).